Consider the following 154-residue polypeptide: MAKKKQNTENYLAQNRKARFNYAIAETFEAGISLTGTEIKSVRAGQITIGDGFVTIHNGNALLTNVHISSYVQGNQFNVDPLRTRQLLLHKREIRVLEKATQEQGVTIVPLKVYLKHGFAKVLVGIGRGKKKYDKREDIKKRDQERELSRRFKN.

The disordered stretch occupies residues 134 to 154 (DKREDIKKRDQERELSRRFKN).

It belongs to the SmpB family.

Its subcellular location is the cytoplasm. In terms of biological role, required for rescue of stalled ribosomes mediated by trans-translation. Binds to transfer-messenger RNA (tmRNA), required for stable association of tmRNA with ribosomes. tmRNA and SmpB together mimic tRNA shape, replacing the anticodon stem-loop with SmpB. tmRNA is encoded by the ssrA gene; the 2 termini fold to resemble tRNA(Ala) and it encodes a 'tag peptide', a short internal open reading frame. During trans-translation Ala-aminoacylated tmRNA acts like a tRNA, entering the A-site of stalled ribosomes, displacing the stalled mRNA. The ribosome then switches to translate the ORF on the tmRNA; the nascent peptide is terminated with the 'tag peptide' encoded by the tmRNA and targeted for degradation. The ribosome is freed to recommence translation, which seems to be the essential function of trans-translation. In Leuconostoc mesenteroides subsp. mesenteroides (strain ATCC 8293 / DSM 20343 / BCRC 11652 / CCM 1803 / JCM 6124 / NCDO 523 / NBRC 100496 / NCIMB 8023 / NCTC 12954 / NRRL B-1118 / 37Y), this protein is SsrA-binding protein.